Here is a 293-residue protein sequence, read N- to C-terminus: Small ribosomal subunit protein uS5 (293 aa).

The disordered stretch occupies residues 1 to 56 (MADDAGAAGGPGGPGGPGMGGRGGFRGGFGSGVRGRGRGRGRGRGRGRGARGGKAE). A2 is modified (N-acetylalanine). Gly residues predominate over residues 7-34 (AAGGPGGPGGPGMGGRGGFRGGFGSGVR). The segment covering 35-51 (GRGRGRGRGRGRGRGAR) has biased composition (basic residues). Glycyl lysine isopeptide (Lys-Gly) (interchain with G-Cter in ubiquitin) cross-links involve residues K54 and K58. Positions 102-165 (LKDEVLKIMP…ILAKLSIVPV (64 aa)) constitute an S5 DRBM domain. T252 is subject to Phosphothreonine. The residue at position 263 (K263) is an N6-acetyllysine. S264 bears the Phosphoserine mark. A Phosphothreonine modification is found at T270. K275 is modified (N6-acetyllysine; alternate). K275 is covalently cross-linked (Glycyl lysine isopeptide (Lys-Gly) (interchain with G-Cter in SUMO1); alternate). A Glycyl lysine isopeptide (Lys-Gly) (interchain with G-Cter in SUMO2); alternate cross-link involves residue K275. K275 is covalently cross-linked (Glycyl lysine isopeptide (Lys-Gly) (interchain with G-Cter in ubiquitin); alternate). A Phosphoserine modification is found at S281.

The protein belongs to the universal ribosomal protein uS5 family. Component of the small ribosomal subunit. Interacts with zinc finger protein ZNF277 (via zinc-finger domains); the interaction is direct; the interaction is extra-ribosomal. Interaction with ZNF277 competes with the binding of RPS2 to protein arginine methyltransferase PRMT3. Post-translationally, citrullinated by PADI4 in the Arg/Gly-rich region. In terms of processing, asymmetric arginine dimethylation by PRMT3 occurs at multiple sites in the Arg/Gly-rich region. Monoubiquitinated at Lys-54 and Lys-58 by RNF10 when a ribosome has stalled during translation, leading to its degradation by the proteasome. Deubiquitinated at Lys-54 and Lys-58 by USP10, preventing degradation by the proteasome and promoting 40S ribosome subunit recycling following ribosome dissociation.

Its subcellular location is the cytoplasm. It localises to the nucleus. It is found in the nucleolus. Its function is as follows. Component of the ribosome, a large ribonucleoprotein complex responsible for the synthesis of proteins in the cell. The small ribosomal subunit (SSU) binds messenger RNAs (mRNAs) and translates the encoded message by selecting cognate aminoacyl-transfer RNA (tRNA) molecules. The large subunit (LSU) contains the ribosomal catalytic site termed the peptidyl transferase center (PTC), which catalyzes the formation of peptide bonds, thereby polymerizing the amino acids delivered by tRNAs into a polypeptide chain. The nascent polypeptides leave the ribosome through a tunnel in the LSU and interact with protein factors that function in enzymatic processing, targeting, and the membrane insertion of nascent chains at the exit of the ribosomal tunnel. Plays a role in the assembly and function of the 40S ribosomal subunit. Mutations in this protein affects the control of translational fidelity. Involved in nucleolar processing of pre-18S ribosomal RNA and ribosome assembly. The polypeptide is Small ribosomal subunit protein uS5 (RPS2) (Bos taurus (Bovine)).